Consider the following 400-residue polypeptide: Acetate kinase (400 aa).

A Mg(2+)-binding site is contributed by N10. Position 17 (K17) interacts with ATP. Residue R91 coordinates substrate. The active-site Proton donor/acceptor is D150. Residues 210–214 (HLGNG), 285–287 (DCR), and 333–337 (GIGEN) contribute to the ATP site. Mg(2+) is bound at residue E387.

Belongs to the acetokinase family. Homodimer. It depends on Mg(2+) as a cofactor. Requires Mn(2+) as cofactor.

It localises to the cytoplasm. The catalysed reaction is acetate + ATP = acetyl phosphate + ADP. Its pathway is metabolic intermediate biosynthesis; acetyl-CoA biosynthesis; acetyl-CoA from acetate: step 1/2. Catalyzes the formation of acetyl phosphate from acetate and ATP. Can also catalyze the reverse reaction. In Cronobacter sakazakii (strain ATCC BAA-894) (Enterobacter sakazakii), this protein is Acetate kinase.